Here is a 40-residue protein sequence, read N- to C-terminus: Alpha-conotoxin GIC (40 aa).

Residues 1-20 (SDGRNDAAKAFDLISSTVKK) constitute a propeptide that is removed on maturation. Cystine bridges form between Cys22–Cys28 and Cys23–Cys36. The ser-Xaa-Pro motif, crucial for potent interaction with nAChR stretch occupies residues 24 to 26 (SHP). The residue at position 36 (Cys36) is a Cysteine amide.

Expressed by the venom duct.

It is found in the secreted. Alpha-conotoxins bind to the nicotinic acetylcholine receptors (nAChR) and inhibit them. This toxin reversibly blocks neuronal nAChRs (alpha-3/beta-2 = alpha-6 or -3/beta-2 or -3 &gt; alpha-3/beta-4 = alpha-4/beta-2). The chain is Alpha-conotoxin GIC from Conus geographus (Geography cone).